Here is a 484-residue protein sequence, read N- to C-terminus: Poly(A) RNA polymerase GLD2 (484 aa).

Serine 62 and serine 69 each carry phosphoserine. A Nuclear localization signal motif is present at residues 76-92 (KRISDEKAFPLDGKRQR). Position 95 is a phosphoserine (serine 95). 2 residues coordinate Mg(2+): aspartate 213 and aspartate 215. The region spanning 386–440 (SLGDLLLGFLKYYATEFDWNTQMISVREAKAIPRPDDMEWRNKYICVEEPFDGTN) is the PAP-associated domain.

Belongs to the DNA polymerase type-B-like family. GLD2 subfamily. In terms of assembly, interacts with CPEB1, CPEB2, CPSF1 and PABPC1. Interacts with QKI isoform QKI7; promoting recruitment to miRNA miR-122 and miR-122 stabilization. Mg(2+) serves as cofactor. It depends on Mn(2+) as a cofactor. In terms of tissue distribution, ubiquitous. In brain, it is highly expressed in the cerebral cortex, cerebellum, hippocampus and olfactory bulb.

Its subcellular location is the cytoplasm. The protein resides in the nucleus. It catalyses the reaction RNA(n) + ATP = RNA(n)-3'-adenine ribonucleotide + diphosphate. Its function is as follows. Cytoplasmic poly(A) RNA polymerase that adds successive AMP monomers to the 3'-end of specific RNAs, forming a poly(A) tail. In contrast to the canonical nuclear poly(A) RNA polymerase, it only adds poly(A) to selected cytoplasmic mRNAs. Does not play a role in replication-dependent histone mRNA degradation. Adds a single nucleotide to the 3' end of specific miRNAs, monoadenylation stabilizes and prolongs the activity of some but not all miRNAs. This chain is Poly(A) RNA polymerase GLD2 (Tent2), found in Mus musculus (Mouse).